Here is a 248-residue protein sequence, read N- to C-terminus: MSETARTTIDQSEVDRFSAMAAEWWDPTGKFRPLHKFNPVRLAYIRDKVCEQFGRDPKSPQPLKGLRLLDIGCGGGLLSEPMARMGADVLGADASEKNIGIARTHAAGSGVNVDYRAVTAEALAEAGESFDIVLNMEVVEHVADVDFFMTTCAHMVRPGGLMFVATINRTLKAAALAIFAAENVLRWLPRGTHQYEKLVRPEELEKPLEASGMQVTDRTGVFFNPLANQWNLSKDMDVNYMIVAKRPL.

S-adenosyl-L-methionine-binding residues include R41, G72, D93, and M136.

This sequence belongs to the methyltransferase superfamily. UbiG/COQ3 family.

It catalyses the reaction a 3-demethylubiquinol + S-adenosyl-L-methionine = a ubiquinol + S-adenosyl-L-homocysteine + H(+). It carries out the reaction a 3-(all-trans-polyprenyl)benzene-1,2-diol + S-adenosyl-L-methionine = a 2-methoxy-6-(all-trans-polyprenyl)phenol + S-adenosyl-L-homocysteine + H(+). The protein operates within cofactor biosynthesis; ubiquinone biosynthesis. Its function is as follows. O-methyltransferase that catalyzes the 2 O-methylation steps in the ubiquinone biosynthetic pathway. The protein is Ubiquinone biosynthesis O-methyltransferase of Sinorhizobium fredii (strain NBRC 101917 / NGR234).